The chain runs to 559 residues: Innexin-10 (559 aa).

4 helical membrane-spanning segments follow: residues 28–48 (YFTC…QFGG), 102–122 (QWVP…SLLW), 182–202 (FLWL…YLCT), and 283–303 (IFIL…GSFF). 2 disordered regions span residues 488–514 (EEKQ…YQNQ) and 527–559 (YRTP…STFK). Residues 503–514 (YTNQNPTPYQNQ) are compositionally biased toward low complexity. The span at 528–559 (RTPSLSRGTDSRPVSTATDTDQTKKQSMSTFK) shows a compositional bias: polar residues.

The protein belongs to the pannexin family.

It is found in the cell membrane. Its subcellular location is the cell junction. The protein localises to the gap junction. Structural component of the gap junctions. This is Innexin-10 (inx-10) from Caenorhabditis elegans.